The chain runs to 168 residues: G/U mismatch-specific DNA glycosylase (168 aa).

This sequence belongs to the uracil-DNA glycosylase (UDG) superfamily. TDG/mug family. In terms of assembly, binds DNA as a monomer.

It localises to the cytoplasm. It catalyses the reaction Specifically hydrolyzes mismatched double-stranded DNA and polynucleotides, releasing free uracil.. In terms of biological role, excises ethenocytosine and uracil, which can arise by alkylation or deamination of cytosine, respectively, from the corresponding mispairs with guanine in ds-DNA. It is capable of hydrolyzing the carbon-nitrogen bond between the sugar-phosphate backbone of the DNA and the mispaired base. The complementary strand guanine functions in substrate recognition. Required for DNA damage lesion repair in stationary-phase cells. This Salmonella agona (strain SL483) protein is G/U mismatch-specific DNA glycosylase.